We begin with the raw amino-acid sequence, 1752 residues long: MGNSSSTPPPSALKNSDLFKTMLRTQYSGSVKTRRINQDIKKQYPLWPDQGTCATKHWEQAVLIPLDSVSEETAKVLNFLRVKIQARKGETARQMTAHTIKKLIVGTIDKNKQQTEILQKTDESDEEMDTTNTMLFIARNKRERIAQQQQADLAAQQQVLLLQREQQREQREKDIKKRDEKKKKLLPDTTQKVEQTDIGEASSSDASAQKPISTDNNPDLKVDGVLTRSQHTTVPSNITIKKDGTSVQYQHPIRNYPTGEGNLTAQVRNPFRPLELQQLRKDCPALPEGIPQLAEWLTQTMAIYNCDEADVEQLARVIFPTPVRQIAGVINGHAAANTAAKIQNYVTACRQHYPAVCDWGTIQAFTYKPPQTAHEYVKHAEIIFKNNSGLEWQHATVPFINMVVQGLPPKVTRSLMSGNPDWSTKTIPQIIPLMQHYLNLQSRQDAKIKQTPLVLQLAMPAQTMNGNKGYVGSYPTNEPYYSFQQQQRPAPRAPPGNVPSNTCFFCKQPGHWKADCPNKTRNLRNMGNMGRGGRMGGPPYRSQPYPAFIQPPQNHQNQYNGRMDRSQLQASAQEWLPGTYPAXDPIDCPYEKSGTKTTQDVITTKNAEIMVTVNHTKIPMLVDTGACLTAIGGAATVVPDLKLTNTEIIAVGISAEPVPHVLAKPTKIQIENTNIDISPWYNPDQTFHILGRDTLSKMRAIVSFEKNGEMTVLLPPTYHKQLSCQTKNTLNIDEYLLQFPDQLWASLPTDIGRMLVPPITIKIKDNASLPSIRQYPLPKDKTEGLRPLISSLENQGILIKCHSPCNTPIFPIKKAGRDEYRMIHDLRAINNIVAPLTAVVASPTTVLSNLAPSLHWFTVIDLSNAFFSVPIHKDSQYLFAFTFEGHQYTWTVLPQGFIHSPTLFSQALYQSLHKIKFKISSEICIYMDDVLIASKDRDTNLKDTAVMLQHLASEGHKVSKKKLQLCQQEVVYLGQLLTPEGRKILPDRKVTVSQFQQPTTIRQIRAFLGLVGYCRHWIPEFSIHSKFLEKQLKKDTAEPFQLDDQQVEAFNKLKHAITTAPVLVVPDPAKPFQLYTSHSEHASIAVLTQKHAGRTRPIAFLSSKFDAIESGLPPCLKACASIHRSLTQADSFILGAPLIIYTTHAICTLLQRDRSQLVTASRFSKWEADLLRPELTFVACSAVSPAHLYMQSCENNIPPHDCVLLTHTISRPRPDLSDLPIPDPDMTLFSDGSYTTGRGGAAVVMHRPVTDDFIIIHQQPGGASAQTAELLALAAACHLATDKTVNIYTDSRYAYGVVHDFGHLWMHRGFVTSAGTPIKNHKEIEYLLKQIMKPKQVSVIKIEAHTKGVSMEVRGNAAADEAAKNAVFLVQRVLKKGDALASTDLVMEYSETDEKFTAGAELHDGVFMRGDLIVPPLEMLHAILLAIHGVSHTHKGGIMSYFSKFWTHPKASQTIDLILGHCQICLKHNPKYKSRLQGHRPLPSRPFAHLQIDFVQMCVKKPMYALVIIDVFSKWPEIIPCNKEDAKTVCDILMKDIIPRWGLPDQIDSDQGTHFTAKISQELTHSIGVAWKLHCPGHPRSSGIVERTNRTLKSKIIKAQEQLQLSKWTEVLPYVLLEMRATPKKHGLSPHEIVMGRPMKTTYLSDMSPLWATDTLVTYMNKLTRQLSAYHQQVVDQWPSTSLPPGPEPGSWCMLRNPKKSSNWEGPFLILLSTPTAVKVEGRPTWIHLDHCKLLRSSLSSSLGGPVNQLLS.

Gly-2 carries N-myristoyl glycine; by host lipidation. A coiled-coil region spans residues 154-185 (AAQQQVLLLQREQQREQREKDIKKRDEKKKKL). The segment covering 168–178 (REQREKDIKKR) has biased composition (basic and acidic residues). The tract at residues 168–222 (REQREKDIKKRDEKKKKLLPDTTQKVEQTDIGEASSSDASAQKPISTDNNPDLKV) is disordered. A compositionally biased stretch (polar residues) spans 201-217 (ASSSDASAQKPISTDNN). Residues 501 to 518 (NTCFFCKQPGHWKADCPN) form a CCHC-type zinc finger. A Peptidase A2 domain is found at 618–694 (IPMLVDTGAC…QTFHILGRDT (77 aa)). The active-site Protease; shared with dimeric partner is the Asp-623. The Reverse transcriptase domain occupies 793 to 977 (ENQGILIKCH…QEVVYLGQLL (185 aa)). Residues Asp-861, Asp-928, Asp-929, Asp-1231, Glu-1269, Asp-1290, Asp-1360, Asp-1493, and Asp-1550 each contribute to the Mg(2+) site. The RNase H type-1 domain occupies 1222-1368 (PDPDMTLFSD…ADEAAKNAVF (147 aa)). The region spanning 1482–1638 (LPSRPFAHLQ…SPHEIVMGRP (157 aa)) is the Integrase catalytic domain.

In terms of assembly, homohexamer. Further associates as homomultimer. The virus core is composed of a lattice formed from hexagonal rings, each containing six capsid monomers. The protease is a homodimer, whose active site consists of two apposed aspartic acid residues. The reverse transcriptase is a monomer. Requires Mg(2+) as cofactor. Specific enzymatic cleavages by the viral protease yield mature proteins. The protease is released by autocatalytic cleavage. The polyprotein is cleaved during and after budding, this process is termed maturation.

Its subcellular location is the host cell membrane. The protein resides in the virion. It catalyses the reaction DNA(n) + a 2'-deoxyribonucleoside 5'-triphosphate = DNA(n+1) + diphosphate. The enzyme catalyses Endonucleolytic cleavage to 5'-phosphomonoester.. Functionally, targets Gag and gag-pol polyproteins to the plasma membrane via a multipartite membrane binding signal, that includes its myristoylated N-terminus. Also mediates nuclear localization of the pre-integration complex. Capsid protein p25 forms the spherical core of the virion that encapsulates the genomic RNA-nucleocapsid complex. Its function is as follows. Involved in the packaging and encapsidation of two copies of the genome. Binds with high affinity to conserved UCUG elements within the packaging signal, located near the 5'-end of the genome. This binding is dependent on genome dimerization. In terms of biological role, mediates proteolytic cleavages of Gag and Gag-Pol polyproteins during or shortly after the release of the virion from the plasma membrane. Cleavages take place as an ordered, step-wise cascade to yield mature proteins. This process is called maturation. Displays maximal activity during the budding process just prior to particle release from the cell. Functionally, is a multifunctional enzyme that converts the viral dimeric RNA genome into dsDNA in the cytoplasm, shortly after virus entry into the cell. This enzyme displays a DNA polymerase activity that can copy either DNA or RNA templates, and a ribonuclease H (RNase H) activity that cleaves the RNA strand of RNA-DNA heteroduplexes in a partially processive 3' to 5' endonucleasic mode. Conversion of viral genomic RNA into dsDNA requires many steps. A tRNA binds to the primer-binding site (PBS) situated at the 5' end of the viral RNA. RT uses the 3' end of the tRNA primer to perform a short round of RNA-dependent minus-strand DNA synthesis. The reading proceeds through the U5 region and ends after the repeated (R) region which is present at both ends of viral RNA. The portion of the RNA-DNA heteroduplex is digested by the RNase H, resulting in a ssDNA product attached to the tRNA primer. This ssDNA/tRNA hybridizes with the identical R region situated at the 3' end of viral RNA. This template exchange, known as minus-strand DNA strong stop transfer, can be either intra- or intermolecular. RT uses the 3' end of this newly synthesized short ssDNA to perform the RNA-dependent minus-strand DNA synthesis of the whole template. RNase H digests the RNA template except for a polypurine tract (PPT) situated at the 5' end of the genome. It is not clear if both polymerase and RNase H activities are simultaneous. RNase H probably can proceed both in a polymerase-dependent (RNA cut into small fragments by the same RT performing DNA synthesis) and a polymerase-independent mode (cleavage of remaining RNA fragments by free RTs). Secondly, RT performs DNA-directed plus-strand DNA synthesis using the PPT that has not been removed by RNase H as primers. PPT and tRNA primers are then removed by RNase H. The 3' and 5' ssDNA PBS regions hybridize to form a circular dsDNA intermediate. Strand displacement synthesis by RT to the PBS and PPT ends produces a blunt ended, linear dsDNA copy of the viral genome that includes long terminal repeats (LTRs) at both ends. Catalyzes viral DNA integration into the host chromosome, by performing a series of DNA cutting and joining reactions. This enzyme activity takes place after virion entry into a cell and reverse transcription of the RNA genome in dsDNA. The first step in the integration process is 3' processing. This step requires a complex comprising the viral genome, matrix protein and integrase. This complex is called the pre-integration complex (PIC). The integrase protein removes 2 nucleotides from each 3' end of the viral DNA, leaving recessed CA OH's at the 3' ends. In the second step that requires cell division, the PIC enters cell nucleus. In the third step, termed strand transfer, the integrase protein joins the previously processed 3' ends to the 5' ends of strands of target cellular DNA at the site of integration. The last step is viral DNA integration into host chromosome. Its function is as follows. Plays a role in budding and is processed by the viral protease during virion maturation outside the cell. This is Gag-Pol polyprotein (gag-pol) from Walleye dermal sarcoma virus (WDSV).